A 282-amino-acid polypeptide reads, in one-letter code: Protoheme IX farnesyltransferase (282 aa).

9 helical membrane passes run 9–29 (LAKP…FLLA), 39–59 (LPLF…GCVF), 79–99 (LVTG…LLIL), 102–122 (LVLY…GFIV), 139–159 (VLGG…VVNI), 165–185 (LALF…IAML), 210–230 (IMLF…VLGS), 231–251 (ADLF…YKSI), and 261–281 (VFAK…CLTM).

This sequence belongs to the UbiA prenyltransferase family. Protoheme IX farnesyltransferase subfamily.

Its subcellular location is the cell inner membrane. It catalyses the reaction heme b + (2E,6E)-farnesyl diphosphate + H2O = Fe(II)-heme o + diphosphate. It participates in porphyrin-containing compound metabolism; heme O biosynthesis; heme O from protoheme: step 1/1. Converts heme B (protoheme IX) to heme O by substitution of the vinyl group on carbon 2 of heme B porphyrin ring with a hydroxyethyl farnesyl side group. The sequence is that of Protoheme IX farnesyltransferase from Francisella tularensis subsp. tularensis (strain FSC 198).